Reading from the N-terminus, the 492-residue chain is GTPase-activating protein MSB4 (492 aa).

In terms of domain architecture, Rab-GAP TBC spans 147 to 367 (GIPAEWRGNA…RIWDCLFYEE (221 aa)).

The protein localises to the cytoplasm. Its subcellular location is the bud. It localises to the bud neck. Regulates exocytosis by functioning as a GAP for SEC4. Also required for efficient polarization of the actin patches. This Saccharomyces cerevisiae (strain ATCC 204508 / S288c) (Baker's yeast) protein is GTPase-activating protein MSB4 (MSB4).